A 420-amino-acid polypeptide reads, in one-letter code: Serine--tRNA ligase (420 aa).

Position 227 to 229 (227 to 229 (TSE)) interacts with L-serine. Residues 258–260 (RRE) and valine 274 contribute to the ATP site. An L-serine-binding site is contributed by glutamate 281. Position 345-348 (345-348 (ELTS)) interacts with ATP. Threonine 380 is a binding site for L-serine.

It belongs to the class-II aminoacyl-tRNA synthetase family. Type-1 seryl-tRNA synthetase subfamily. In terms of assembly, homodimer. The tRNA molecule binds across the dimer.

Its subcellular location is the cytoplasm. The catalysed reaction is tRNA(Ser) + L-serine + ATP = L-seryl-tRNA(Ser) + AMP + diphosphate + H(+). The enzyme catalyses tRNA(Sec) + L-serine + ATP = L-seryl-tRNA(Sec) + AMP + diphosphate + H(+). Its pathway is aminoacyl-tRNA biosynthesis; selenocysteinyl-tRNA(Sec) biosynthesis; L-seryl-tRNA(Sec) from L-serine and tRNA(Sec): step 1/1. In terms of biological role, catalyzes the attachment of serine to tRNA(Ser). Is also able to aminoacylate tRNA(Sec) with serine, to form the misacylated tRNA L-seryl-tRNA(Sec), which will be further converted into selenocysteinyl-tRNA(Sec). In Nocardia farcinica (strain IFM 10152), this protein is Serine--tRNA ligase.